Reading from the N-terminus, the 417-residue chain is NADH-quinone oxidoreductase subunit D (417 aa).

This sequence belongs to the complex I 49 kDa subunit family. As to quaternary structure, NDH-1 is composed of 14 different subunits. Subunits NuoB, C, D, E, F, and G constitute the peripheral sector of the complex.

The protein resides in the cell inner membrane. The enzyme catalyses a quinone + NADH + 5 H(+)(in) = a quinol + NAD(+) + 4 H(+)(out). Functionally, NDH-1 shuttles electrons from NADH, via FMN and iron-sulfur (Fe-S) centers, to quinones in the respiratory chain. The immediate electron acceptor for the enzyme in this species is believed to be ubiquinone. Couples the redox reaction to proton translocation (for every two electrons transferred, four hydrogen ions are translocated across the cytoplasmic membrane), and thus conserves the redox energy in a proton gradient. The sequence is that of NADH-quinone oxidoreductase subunit D from Aromatoleum aromaticum (strain DSM 19018 / LMG 30748 / EbN1) (Azoarcus sp. (strain EbN1)).